We begin with the raw amino-acid sequence, 133 residues long: Small ribosomal subunit protein uS8 (133 aa).

The protein belongs to the universal ribosomal protein uS8 family. Part of the 30S ribosomal subunit. Contacts proteins S5 and S12.

One of the primary rRNA binding proteins, it binds directly to 16S rRNA central domain where it helps coordinate assembly of the platform of the 30S subunit. This Prochlorococcus marinus (strain MIT 9301) protein is Small ribosomal subunit protein uS8.